The following is a 293-amino-acid chain: Lipoyl synthase (293 aa).

Cys47, Cys52, Cys58, Cys73, Cys77, Cys80, and Ser285 together coordinate [4Fe-4S] cluster. In terms of domain architecture, Radical SAM core spans 59–274 (WSEGTATFMI…EKIGLELGFR (216 aa)).

It belongs to the radical SAM superfamily. Lipoyl synthase family. [4Fe-4S] cluster is required as a cofactor.

The protein resides in the cytoplasm. The catalysed reaction is [[Fe-S] cluster scaffold protein carrying a second [4Fe-4S](2+) cluster] + N(6)-octanoyl-L-lysyl-[protein] + 2 oxidized [2Fe-2S]-[ferredoxin] + 2 S-adenosyl-L-methionine + 4 H(+) = [[Fe-S] cluster scaffold protein] + N(6)-[(R)-dihydrolipoyl]-L-lysyl-[protein] + 4 Fe(3+) + 2 hydrogen sulfide + 2 5'-deoxyadenosine + 2 L-methionine + 2 reduced [2Fe-2S]-[ferredoxin]. It functions in the pathway protein modification; protein lipoylation via endogenous pathway; protein N(6)-(lipoyl)lysine from octanoyl-[acyl-carrier-protein]: step 2/2. Catalyzes the radical-mediated insertion of two sulfur atoms into the C-6 and C-8 positions of the octanoyl moiety bound to the lipoyl domains of lipoate-dependent enzymes, thereby converting the octanoylated domains into lipoylated derivatives. This is Lipoyl synthase from Christiangramia forsetii (strain DSM 17595 / CGMCC 1.15422 / KT0803) (Gramella forsetii).